A 250-amino-acid polypeptide reads, in one-letter code: 23S rRNA (guanosine-2'-O-)-methyltransferase RlmB (250 aa).

Residues Gly198, Ile218, and Leu227 each coordinate S-adenosyl-L-methionine.

This sequence belongs to the class IV-like SAM-binding methyltransferase superfamily. RNA methyltransferase TrmH family. RlmB subfamily.

The protein localises to the cytoplasm. It carries out the reaction guanosine(2251) in 23S rRNA + S-adenosyl-L-methionine = 2'-O-methylguanosine(2251) in 23S rRNA + S-adenosyl-L-homocysteine + H(+). Functionally, specifically methylates the ribose of guanosine 2251 in 23S rRNA. The chain is 23S rRNA (guanosine-2'-O-)-methyltransferase RlmB from Coxiella burnetii (strain RSA 493 / Nine Mile phase I).